Reading from the N-terminus, the 843-residue chain is Neuroligin-1 (843 aa).

Positions 1–45 are cleaved as a signal peptide; it reads MALPRCMWPNYVWRAMMACVVHRGSGAPLTLCLLGCLLQTFHVLS. The Extracellular segment spans residues 46–697; the sequence is QKLDDVDPLV…DQRDYSTELS (652 aa). Asparagine 109 is a glycosylation site (N-linked (GlcNAc...) (complex) asparagine). Residues cysteine 117 and cysteine 153 are joined by a disulfide bond. Residues 167-190 are disordered; it reads LTKKHTDDLGDNDGAEDEDIRDSG. The span at 175–186 shows a compositional bias: acidic residues; that stretch reads LGDNDGAEDEDI. Asparagine 303 and asparagine 343 each carry an N-linked (GlcNAc...) (complex) asparagine glycan. 2 cysteine pairs are disulfide-bonded: cysteine 342-cysteine 353 and cysteine 512-cysteine 546. Asparagine 547 carries an N-linked (GlcNAc...) asparagine glycan. Positions 647–688 are disordered; that stretch reads TKVPSTDITLRPTRKNSTPVTSAFPTAKQDDPKQQPSPFSVD. Over residues 661 to 670 the composition is skewed to polar residues; sequence KNSTPVTSAF. Serine 683 and serine 686 each carry an O-linked (GalNAc...) serine glycan. Residues 698–718 form a helical membrane-spanning segment; that stretch reads VTIAVGASLLFLNILAFAALY. The Cytoplasmic segment spans residues 719–843; the sequence is YKKDKRRHDV…HPHSHSTTRV (125 aa). Residues 822 to 843 form a disordered region; that stretch reads GGQNNTLPHPHPHPHSHSTTRV. The segment covering 831–843 has biased composition (basic residues); the sequence is PHPHPHSHSTTRV.

It belongs to the type-B carboxylesterase/lipase family. Interacts with neurexins NRXN1, NRXN2 and NRXN3. Interaction with neurexins is mediated by heparan sulfate glycan modification on neurexin. Interacts (via its C-terminus) with DLG4/PSD-95 (via PDZ domain 3). Interacts with AIP1, GOPC and PDZRN3. Interacts with NLGN3. In terms of tissue distribution, brain and arteries (at protein level). Expressed in olfactory bulb. Detected in brain.

The protein localises to the cell membrane. The protein resides in the postsynaptic density. Its subcellular location is the synaptic cleft. It localises to the synaptic cell membrane. Its function is as follows. Cell surface protein involved in cell-cell-interactions via its interactions with neurexin family members. Plays a role in synapse function and synaptic signal transmission, and probably mediates its effects by recruiting and clustering other synaptic proteins. May promote the initial formation of synapses, but is not essential for this. In vitro, triggers the de novo formation of presynaptic structures. May be involved in specification of excitatory synapses. Required to maintain wakefulness quality and normal synchrony of cerebral cortex activity during wakefulness and sleep. The protein is involved in nervous system development. This is Neuroligin-1 (Nlgn1) from Mus musculus (Mouse).